A 201-amino-acid polypeptide reads, in one-letter code: Adenylyl-sulfate kinase (201 aa).

Residue Gly35–Ser42 participates in ATP binding. The Phosphoserine intermediate role is filled by Ser109.

The protein belongs to the APS kinase family.

It carries out the reaction adenosine 5'-phosphosulfate + ATP = 3'-phosphoadenylyl sulfate + ADP + H(+). It functions in the pathway sulfur metabolism; hydrogen sulfide biosynthesis; sulfite from sulfate: step 2/3. In terms of biological role, catalyzes the synthesis of activated sulfate. The polypeptide is Adenylyl-sulfate kinase (Bacteroides thetaiotaomicron (strain ATCC 29148 / DSM 2079 / JCM 5827 / CCUG 10774 / NCTC 10582 / VPI-5482 / E50)).